Reading from the N-terminus, the 161-residue chain is Urease accessory protein UreE (161 aa).

This sequence belongs to the UreE family.

It is found in the cytoplasm. Functionally, involved in urease metallocenter assembly. Binds nickel. Probably functions as a nickel donor during metallocenter assembly. In Arthrobacter sp. (strain FB24), this protein is Urease accessory protein UreE.